A 941-amino-acid chain; its full sequence is Isoleucine--tRNA ligase (941 aa).

A 'HIGH' region motif is present at residues 58–68; it reads PYANGNIHLGH. E564 is an L-isoleucyl-5'-AMP binding site. A 'KMSKS' region motif is present at residues 605–609; the sequence is KMSKS. ATP is bound at residue K608. Residues C904, C907, C924, and C927 each coordinate Zn(2+).

This sequence belongs to the class-I aminoacyl-tRNA synthetase family. IleS type 1 subfamily. As to quaternary structure, monomer. It depends on Zn(2+) as a cofactor.

The protein localises to the cytoplasm. It catalyses the reaction tRNA(Ile) + L-isoleucine + ATP = L-isoleucyl-tRNA(Ile) + AMP + diphosphate. In terms of biological role, catalyzes the attachment of isoleucine to tRNA(Ile). As IleRS can inadvertently accommodate and process structurally similar amino acids such as valine, to avoid such errors it has two additional distinct tRNA(Ile)-dependent editing activities. One activity is designated as 'pretransfer' editing and involves the hydrolysis of activated Val-AMP. The other activity is designated 'posttransfer' editing and involves deacylation of mischarged Val-tRNA(Ile). The chain is Isoleucine--tRNA ligase from Hahella chejuensis (strain KCTC 2396).